Consider the following 419-residue polypeptide: D-amino acid dehydrogenase (419 aa).

Valine 3–tyrosine 17 is an FAD binding site.

The protein belongs to the DadA oxidoreductase family. FAD serves as cofactor.

The enzyme catalyses a D-alpha-amino acid + A + H2O = a 2-oxocarboxylate + AH2 + NH4(+). Its pathway is amino-acid degradation; D-alanine degradation; NH(3) and pyruvate from D-alanine: step 1/1. Oxidative deamination of D-amino acids. This is D-amino acid dehydrogenase from Chromohalobacter salexigens (strain ATCC BAA-138 / DSM 3043 / CIP 106854 / NCIMB 13768 / 1H11).